The sequence spans 656 residues: Putative cysteine-rich receptor-like protein kinase 32 (656 aa).

An N-terminal signal peptide occupies residues 1–23 (MCLQNLLSILCFVLAISFGYVSA). Gnk2-homologous domains are found at residues 24 to 126 (QKCV…NSSF) and 134 to 238 (PTMV…GSEY). The Extracellular portion of the chain corresponds to 24 to 262 (QKCVDSMFFR…PDGKTISTGA (239 aa)). N-linked (GlcNAc...) asparagine glycosylation is found at N35, N52, N61, N103, and N123. A helical membrane pass occupies residues 263 to 283 (IVAVVVSVVIFVVLLALVLVI). Over 284 to 656 (RKRRQSYKTL…SASITRVTPR (373 aa)) the chain is Cytoplasmic. A Protein kinase domain is found at 321–606 (FSRNNKLGKG…IFQMLTNSSI (286 aa)). Residues 327–335 (LGKGGFGEV) and K349 contribute to the ATP site. The residue at position 394 (Y394) is a Phosphotyrosine. Catalysis depends on D454, which acts as the Proton acceptor. S458 carries the post-translational modification Phosphoserine. A Phosphothreonine modification is found at T494. At Y502 the chain carries Phosphotyrosine.

The protein belongs to the protein kinase superfamily. Ser/Thr protein kinase family. CRK subfamily.

It is found in the membrane. The catalysed reaction is L-seryl-[protein] + ATP = O-phospho-L-seryl-[protein] + ADP + H(+). It catalyses the reaction L-threonyl-[protein] + ATP = O-phospho-L-threonyl-[protein] + ADP + H(+). In Arabidopsis thaliana (Mouse-ear cress), this protein is Putative cysteine-rich receptor-like protein kinase 32 (CRK32).